The sequence spans 219 residues: Ribose-5-phosphate isomerase A (219 aa).

Substrate is bound by residues 28 to 31 (SGST), 81 to 84 (DGAD), and 94 to 97 (KGGG). Glu-103 acts as the Proton acceptor in catalysis. Residue Lys-121 coordinates substrate.

This sequence belongs to the ribose 5-phosphate isomerase family. Homodimer.

The catalysed reaction is aldehydo-D-ribose 5-phosphate = D-ribulose 5-phosphate. The protein operates within carbohydrate degradation; pentose phosphate pathway; D-ribose 5-phosphate from D-ribulose 5-phosphate (non-oxidative stage): step 1/1. In terms of biological role, catalyzes the reversible conversion of ribose-5-phosphate to ribulose 5-phosphate. The sequence is that of Ribose-5-phosphate isomerase A from Actinobacillus pleuropneumoniae serotype 3 (strain JL03).